The following is a 600-amino-acid chain: Proline--tRNA ligase (600 aa).

It belongs to the class-II aminoacyl-tRNA synthetase family. ProS type 1 subfamily. Homodimer.

Its subcellular location is the cytoplasm. The catalysed reaction is tRNA(Pro) + L-proline + ATP = L-prolyl-tRNA(Pro) + AMP + diphosphate. In terms of biological role, catalyzes the attachment of proline to tRNA(Pro) in a two-step reaction: proline is first activated by ATP to form Pro-AMP and then transferred to the acceptor end of tRNA(Pro). As ProRS can inadvertently accommodate and process non-cognate amino acids such as alanine and cysteine, to avoid such errors it has two additional distinct editing activities against alanine. One activity is designated as 'pretransfer' editing and involves the tRNA(Pro)-independent hydrolysis of activated Ala-AMP. The other activity is designated 'posttransfer' editing and involves deacylation of mischarged Ala-tRNA(Pro). The misacylated Cys-tRNA(Pro) is not edited by ProRS. This Prochlorococcus marinus (strain AS9601) protein is Proline--tRNA ligase.